Consider the following 423-residue polypeptide: Histidine--tRNA ligase (423 aa).

It belongs to the class-II aminoacyl-tRNA synthetase family. Homodimer.

It localises to the cytoplasm. It carries out the reaction tRNA(His) + L-histidine + ATP = L-histidyl-tRNA(His) + AMP + diphosphate + H(+). This chain is Histidine--tRNA ligase, found in Haemophilus influenzae (strain PittEE).